We begin with the raw amino-acid sequence, 156 residues long: ATP synthase subunit b (156 aa).

A helical transmembrane segment spans residues 7 to 29 (LIGQLIAFALFTWFCVKFVWPPI).

This sequence belongs to the ATPase B chain family. In terms of assembly, F-type ATPases have 2 components, F(1) - the catalytic core - and F(0) - the membrane proton channel. F(1) has five subunits: alpha(3), beta(3), gamma(1), delta(1), epsilon(1). F(0) has three main subunits: a(1), b(2) and c(10-14). The alpha and beta chains form an alternating ring which encloses part of the gamma chain. F(1) is attached to F(0) by a central stalk formed by the gamma and epsilon chains, while a peripheral stalk is formed by the delta and b chains.

The protein resides in the cell inner membrane. In terms of biological role, f(1)F(0) ATP synthase produces ATP from ADP in the presence of a proton or sodium gradient. F-type ATPases consist of two structural domains, F(1) containing the extramembraneous catalytic core and F(0) containing the membrane proton channel, linked together by a central stalk and a peripheral stalk. During catalysis, ATP synthesis in the catalytic domain of F(1) is coupled via a rotary mechanism of the central stalk subunits to proton translocation. Component of the F(0) channel, it forms part of the peripheral stalk, linking F(1) to F(0). This is ATP synthase subunit b from Mannheimia succiniciproducens (strain KCTC 0769BP / MBEL55E).